The primary structure comprises 233 residues: Purine nucleoside phosphorylase DeoD-type (233 aa).

Position 4 (His-4) interacts with a purine D-ribonucleoside. Residues Gly-20, Arg-24, Arg-43, and 87-90 (RIGT) each bind phosphate. A purine D-ribonucleoside contacts are provided by residues 179–181 (EME) and 203–204 (SD). The active-site Proton donor is the Asp-204.

The protein belongs to the PNP/UDP phosphorylase family. As to quaternary structure, homohexamer; trimer of homodimers.

It carries out the reaction a purine D-ribonucleoside + phosphate = a purine nucleobase + alpha-D-ribose 1-phosphate. It catalyses the reaction a purine 2'-deoxy-D-ribonucleoside + phosphate = a purine nucleobase + 2-deoxy-alpha-D-ribose 1-phosphate. Catalyzes the reversible phosphorolytic breakdown of the N-glycosidic bond in the beta-(deoxy)ribonucleoside molecules, with the formation of the corresponding free purine bases and pentose-1-phosphate. This is Purine nucleoside phosphorylase DeoD-type from Helicobacter pylori (strain J99 / ATCC 700824) (Campylobacter pylori J99).